A 370-amino-acid chain; its full sequence is Popeye domain-containing 2 (370 aa).

Transmembrane regions (helical) follow at residues alanine 51–leucine 71 and valine 78–phenylalanine 98. Residues proline 275–leucine 349 are disordered. Residues glycine 283–glycine 294 are compositionally biased toward low complexity. Polar residues-rich tracts occupy residues asparagine 307–glutamine 319 and glutamine 330–leucine 347.

The protein belongs to the popeye family. As to expression, expressed in the heart and, slightly, in skeletal muscle.

The protein localises to the membrane. The protein resides in the cell membrane. It localises to the sarcolemma. In terms of biological role, important for striated muscle differentiation and cardiac morphogenesis. Is also required for cardiac conduction system development, plays a regulatory function in heart rate dynamics mediated, at least in part, through cAMP-binding. The protein is Popeye domain-containing 2 of Danio rerio (Zebrafish).